Reading from the N-terminus, the 156-residue chain is Ribonuclease pancreatic (156 aa).

The signal sequence occupies residues 1–28 (MALEKSLVRLLLLVLILLVLGWVQPSLG). The span at 33-43 (AKKFQRQHMDS) shows a compositional bias: basic and acidic residues. The segment at 33-53 (AKKFQRQHMDSDSSPSSSSTY) is disordered. K35 and R38 together coordinate substrate. The active-site Proton acceptor is H40. Disulfide bonds link C54-C112, C68-C123, C86-C138, and C93-C100. N-linked (GlcNAc...) asparagine; partial glycosylation occurs at N62. Residues 69 to 73 (KPVNT) and K94 contribute to the substrate site. N-linked (GlcNAc...) asparagine glycosylation occurs at N104. R113 is a binding site for substrate. N-linked (GlcNAc...) asparagine glycosylation is present at N116. H147 functions as the Proton donor in the catalytic mechanism.

The protein belongs to the pancreatic ribonuclease family. In terms of assembly, monomer. Interacts with and forms tight 1:1 complexes with RNH1. Dimerization of two such complexes may occur. Interaction with RNH1 inhibits this protein. N-linked glycans are of complex type. In terms of tissue distribution, pancreas and other tissues and body fluids (indicating it may have other physiological functions besides its role in digestion).

The protein localises to the secreted. The catalysed reaction is an [RNA] containing cytidine + H2O = an [RNA]-3'-cytidine-3'-phosphate + a 5'-hydroxy-ribonucleotide-3'-[RNA].. It catalyses the reaction an [RNA] containing uridine + H2O = an [RNA]-3'-uridine-3'-phosphate + a 5'-hydroxy-ribonucleotide-3'-[RNA].. In terms of biological role, endonuclease that catalyzes the cleavage of RNA on the 3' side of pyrimidine nucleotides. Acts on single-stranded and double-stranded RNA. The chain is Ribonuclease pancreatic (RNASE1) from Homo sapiens (Human).